A 172-amino-acid polypeptide reads, in one-letter code: RNA silencing suppressor p19 (172 aa).

Residues 1–20 (MERAIQGNDAREQANSERWD) show a composition bias toward basic and acidic residues. Positions 1-38 (MERAIQGNDAREQANSERWDGGSGSSTSPFQLPDESPS) are disordered.

This sequence belongs to the tombusvirus protein p19 family. Homodimer.

Its function is as follows. Viral suppressor of RNA silencing which binds specifically to silencing RNAs (siRNAs). Acts as a molecular caliper to specifically select siRNAs based on the length of the duplex region of the RNA. The sequence is that of RNA silencing suppressor p19 from Tomato bushy stunt virus (strain type) (TBSV).